Here is a 167-residue protein sequence, read N- to C-terminus: MKKIRIGQGFDIHQLAAGRELVIGGVTIPYEKGLLGHSDADVLLHALCDALLGAAALGDIGKHFSDTDARYKDIDSRKLVCKVHRLLAETGYRVVNIDATIIAQAPKMAPHISGMIANIAQDLAMPAGNINIKAKTAEKLGAVGRGEGIVAEVVCLIANSDEGEAQP.

Residues D11 and H13 each contribute to the a divalent metal cation site. 4-CDP-2-C-methyl-D-erythritol 2-phosphate contacts are provided by residues 11–13 (DIH) and 37–38 (HS). H45 is a binding site for a divalent metal cation. Residues 59-61 (DIG), 64-68 (FSDTD), 103-109 (AQAPKMA), and R145 each bind 4-CDP-2-C-methyl-D-erythritol 2-phosphate.

It belongs to the IspF family. Homotrimer. A divalent metal cation is required as a cofactor.

It carries out the reaction 4-CDP-2-C-methyl-D-erythritol 2-phosphate = 2-C-methyl-D-erythritol 2,4-cyclic diphosphate + CMP. The protein operates within isoprenoid biosynthesis; isopentenyl diphosphate biosynthesis via DXP pathway; isopentenyl diphosphate from 1-deoxy-D-xylulose 5-phosphate: step 4/6. In terms of biological role, involved in the biosynthesis of isopentenyl diphosphate (IPP) and dimethylallyl diphosphate (DMAPP), two major building blocks of isoprenoid compounds. Catalyzes the conversion of 4-diphosphocytidyl-2-C-methyl-D-erythritol 2-phosphate (CDP-ME2P) to 2-C-methyl-D-erythritol 2,4-cyclodiphosphate (ME-CPP) with a corresponding release of cytidine 5-monophosphate (CMP). The sequence is that of 2-C-methyl-D-erythritol 2,4-cyclodiphosphate synthase from Nitrosomonas eutropha (strain DSM 101675 / C91 / Nm57).